A 227-amino-acid polypeptide reads, in one-letter code: MTNNLSGYRNKFVRVKTSKKRTVSSSNWLRRQLNDPYVAKARLEGFRSRAAYKLLEIHGKFKLFNPNMKIVDLGAAPGGWSQVASKLIKASDNSLNNKIISIDLLEIEPIAEVEFFQKDFFEENTEELIIQALDGKADIVMSDMASNTIGHKATDHIRTLLLCEQAFEFALKVLKPSGHFIAKIFRGGAENELLNKVKREFRTVKHFKPSSSRSESTEIYLVALNKK.

Positions 78, 80, 103, 119, and 143 each coordinate S-adenosyl-L-methionine. Lysine 183 acts as the Proton acceptor in catalysis.

This sequence belongs to the class I-like SAM-binding methyltransferase superfamily. RNA methyltransferase RlmE family.

Its subcellular location is the cytoplasm. The enzyme catalyses uridine(2552) in 23S rRNA + S-adenosyl-L-methionine = 2'-O-methyluridine(2552) in 23S rRNA + S-adenosyl-L-homocysteine + H(+). Its function is as follows. Specifically methylates the uridine in position 2552 of 23S rRNA at the 2'-O position of the ribose in the fully assembled 50S ribosomal subunit. The protein is Ribosomal RNA large subunit methyltransferase E of Rickettsia felis (strain ATCC VR-1525 / URRWXCal2) (Rickettsia azadi).